We begin with the raw amino-acid sequence, 92 residues long: Putative pterin-4-alpha-carbinolamine dehydratase (92 aa).

Belongs to the pterin-4-alpha-carbinolamine dehydratase family.

It carries out the reaction (4aS,6R)-4a-hydroxy-L-erythro-5,6,7,8-tetrahydrobiopterin = (6R)-L-erythro-6,7-dihydrobiopterin + H2O. In Cereibacter sphaeroides (strain ATCC 17023 / DSM 158 / JCM 6121 / CCUG 31486 / LMG 2827 / NBRC 12203 / NCIMB 8253 / ATH 2.4.1.) (Rhodobacter sphaeroides), this protein is Putative pterin-4-alpha-carbinolamine dehydratase.